Reading from the N-terminus, the 265-residue chain is Hydroxyethylthiazole kinase (265 aa).

Met36 contacts substrate. ATP-binding residues include Lys112 and Ser160. Gly187 provides a ligand contact to substrate.

The protein belongs to the Thz kinase family. Mg(2+) is required as a cofactor.

It catalyses the reaction 5-(2-hydroxyethyl)-4-methylthiazole + ATP = 4-methyl-5-(2-phosphooxyethyl)-thiazole + ADP + H(+). Its pathway is cofactor biosynthesis; thiamine diphosphate biosynthesis; 4-methyl-5-(2-phosphoethyl)-thiazole from 5-(2-hydroxyethyl)-4-methylthiazole: step 1/1. Functionally, catalyzes the phosphorylation of the hydroxyl group of 4-methyl-5-beta-hydroxyethylthiazole (THZ). In Clostridium perfringens (strain 13 / Type A), this protein is Hydroxyethylthiazole kinase.